The chain runs to 90 residues: Large ribosomal subunit protein eL31 (90 aa).

It belongs to the eukaryotic ribosomal protein eL31 family.

The polypeptide is Large ribosomal subunit protein eL31 (Natronomonas pharaonis (strain ATCC 35678 / DSM 2160 / CIP 103997 / JCM 8858 / NBRC 14720 / NCIMB 2260 / Gabara) (Halobacterium pharaonis)).